Here is a 100-residue protein sequence, read N- to C-terminus: Large ribosomal subunit protein uL23 (100 aa).

It belongs to the universal ribosomal protein uL23 family. As to quaternary structure, part of the 50S ribosomal subunit. Contacts protein L29, and trigger factor when it is bound to the ribosome.

In terms of biological role, one of the early assembly proteins it binds 23S rRNA. One of the proteins that surrounds the polypeptide exit tunnel on the outside of the ribosome. Forms the main docking site for trigger factor binding to the ribosome. The chain is Large ribosomal subunit protein uL23 from Escherichia coli O157:H7.